Consider the following 316-residue polypeptide: Acetyl-coenzyme A carboxylase carboxyl transferase subunit alpha (316 aa).

One can recognise a CoA carboxyltransferase C-terminal domain in the interval 39 to 293 (RLQDKSESLT…REQLNSQLHM (255 aa)).

The protein belongs to the AccA family. In terms of assembly, acetyl-CoA carboxylase is a heterohexamer composed of biotin carboxyl carrier protein (AccB), biotin carboxylase (AccC) and two subunits each of ACCase subunit alpha (AccA) and ACCase subunit beta (AccD).

Its subcellular location is the cytoplasm. The catalysed reaction is N(6)-carboxybiotinyl-L-lysyl-[protein] + acetyl-CoA = N(6)-biotinyl-L-lysyl-[protein] + malonyl-CoA. The protein operates within lipid metabolism; malonyl-CoA biosynthesis; malonyl-CoA from acetyl-CoA: step 1/1. In terms of biological role, component of the acetyl coenzyme A carboxylase (ACC) complex. First, biotin carboxylase catalyzes the carboxylation of biotin on its carrier protein (BCCP) and then the CO(2) group is transferred by the carboxyltransferase to acetyl-CoA to form malonyl-CoA. The chain is Acetyl-coenzyme A carboxylase carboxyl transferase subunit alpha from Stutzerimonas stutzeri (strain A1501) (Pseudomonas stutzeri).